Consider the following 274-residue polypeptide: tRNA dimethylallyltransferase (274 aa).

Residues 9 to 12 (DSLS) form an interaction with substrate tRNA region.

This sequence belongs to the IPP transferase family. As to quaternary structure, monomer. Requires Mg(2+) as cofactor.

It carries out the reaction adenosine(37) in tRNA + dimethylallyl diphosphate = N(6)-dimethylallyladenosine(37) in tRNA + diphosphate. Catalyzes the transfer of a dimethylallyl group onto the adenine at position 37 in tRNAs that read codons beginning with uridine, leading to the formation of N6-(dimethylallyl)adenosine (i(6)A). The chain is tRNA dimethylallyltransferase (miaA) from Helicobacter pylori (strain P12).